The chain runs to 421 residues: Enolase (421 aa).

Gln-161 is a (2R)-2-phosphoglycerate binding site. The Proton donor role is filled by Glu-203. 3 residues coordinate Mg(2+): Asp-240, Glu-283, and Asp-310. 4 residues coordinate (2R)-2-phosphoglycerate: Lys-335, Arg-364, Ser-365, and Lys-386. Residue Lys-335 is the Proton acceptor of the active site.

This sequence belongs to the enolase family. Requires Mg(2+) as cofactor.

Its subcellular location is the cytoplasm. It is found in the secreted. It localises to the cell surface. It carries out the reaction (2R)-2-phosphoglycerate = phosphoenolpyruvate + H2O. The protein operates within carbohydrate degradation; glycolysis; pyruvate from D-glyceraldehyde 3-phosphate: step 4/5. Functionally, catalyzes the reversible conversion of 2-phosphoglycerate (2-PG) into phosphoenolpyruvate (PEP). It is essential for the degradation of carbohydrates via glycolysis. The polypeptide is Enolase (Sulfurimonas denitrificans (strain ATCC 33889 / DSM 1251) (Thiomicrospira denitrificans (strain ATCC 33889 / DSM 1251))).